The chain runs to 239 residues: Large ribosomal subunit protein uL2 (239 aa).

Residues 200–239 (VNHPHGGKEHHIGRPSTVSRRAPPGRKVGHIAARRTGRRK) are disordered. Residues 222-239 (PPGRKVGHIAARRTGRRK) show a composition bias toward basic residues.

Belongs to the universal ribosomal protein uL2 family. As to quaternary structure, part of the 50S ribosomal subunit. Forms a bridge to the 30S subunit in the 70S ribosome.

One of the primary rRNA binding proteins. Required for association of the 30S and 50S subunits to form the 70S ribosome, for tRNA binding and peptide bond formation. It has been suggested to have peptidyltransferase activity; this is somewhat controversial. Makes several contacts with the 16S rRNA in the 70S ribosome. The sequence is that of Large ribosomal subunit protein uL2 from Thermococcus kodakarensis (strain ATCC BAA-918 / JCM 12380 / KOD1) (Pyrococcus kodakaraensis (strain KOD1)).